Here is a 741-residue protein sequence, read N- to C-terminus: NAD(P)H-quinone oxidoreductase subunit 5, chloroplastic (741 aa).

Transmembrane regions (helical) follow at residues 9 to 29 (WIIPFLPLPVPMLIGLGLLLF), 40 to 60 (WAFQSVLLLSIVMIFSMNLSI), 89 to 109 (IDPLTSIMSILITTVGILVLI), 125 to 145 (FAYMSFFSTSMLGLVTSSNLI), 147 to 167 (IYIFWELVGMCSYLLIGFWFT), 185 to 205 (GDFGLLLGILGFYWITGSFEF), 219 to 239 (NQVNFLFVTLCAVLLFAGAIA), 258 to 278 (TPISALIHAATMVAAGIFLVA), 289 to 311 (HIMNFISLIGIITVFLGATLALA), 327 to 347 (LGYMMLALGMGSYRSALFHLI), 354 to 374 (ALLFLGSGSVIHSMETLVGYC), 396 to 416 (NSFLLGTLSLCGIPPLACFWS), 425 to 445 (WLYSPIFAIIAWSTAGLTAFY), 549 to 569 (LFPILILFIFTLFVGFLGIPL), 605 to 625 (LFSVSIASFGIFIAFFLYKPV), and 721 to 741 (YLFFYFSYVSIFLVIYYFLNL).

The protein belongs to the complex I subunit 5 family. In terms of assembly, NDH is composed of at least 16 different subunits, 5 of which are encoded in the nucleus.

It is found in the plastid. The protein localises to the chloroplast thylakoid membrane. The catalysed reaction is a plastoquinone + NADH + (n+1) H(+)(in) = a plastoquinol + NAD(+) + n H(+)(out). It carries out the reaction a plastoquinone + NADPH + (n+1) H(+)(in) = a plastoquinol + NADP(+) + n H(+)(out). Its function is as follows. NDH shuttles electrons from NAD(P)H:plastoquinone, via FMN and iron-sulfur (Fe-S) centers, to quinones in the photosynthetic chain and possibly in a chloroplast respiratory chain. The immediate electron acceptor for the enzyme in this species is believed to be plastoquinone. Couples the redox reaction to proton translocation, and thus conserves the redox energy in a proton gradient. The chain is NAD(P)H-quinone oxidoreductase subunit 5, chloroplastic (ndhF) from Symphyotrichum cordifolium (Heart-leaved aster).